Here is a 28-residue protein sequence, read N- to C-terminus: Phospholipase A2 pseudexin C chain (28 aa).

Tyr-28 provides a ligand contact to Ca(2+).

This sequence belongs to the phospholipase A2 family. Group I subfamily. It depends on Ca(2+) as a cofactor. In terms of tissue distribution, expressed by the venom gland.

The protein localises to the secreted. The catalysed reaction is a 1,2-diacyl-sn-glycero-3-phosphocholine + H2O = a 1-acyl-sn-glycero-3-phosphocholine + a fatty acid + H(+). Its function is as follows. PLA2 catalyzes the calcium-dependent hydrolysis of the 2-acyl groups in 3-sn-phosphoglycerides. The sequence is that of Phospholipase A2 pseudexin C chain from Pseudechis porphyriacus (Red-bellied black snake).